We begin with the raw amino-acid sequence, 193 residues long: Inosine triphosphate pyrophosphatase (193 aa).

Residue 10–15 coordinates ITP; sequence TGNANK. Glu-42 contributes to the Mg(2+) binding site. Residues Lys-54, 70-71, Lys-87, 146-149, Lys-169, and 174-175 contribute to the ITP site; these read DT, FGWD, and HR.

The protein belongs to the HAM1 NTPase family. Homodimer. Requires Mg(2+) as cofactor. It depends on Mn(2+) as a cofactor.

The protein localises to the cytoplasm. Its subcellular location is the nucleus. It carries out the reaction ITP + H2O = IMP + diphosphate + H(+). It catalyses the reaction dITP + H2O = dIMP + diphosphate + H(+). The catalysed reaction is XTP + H2O = XMP + diphosphate + H(+). Pyrophosphatase that hydrolyzes non-canonical purine nucleotides such as inosine triphosphate (ITP), deoxyinosine triphosphate (dITP) or xanthosine 5'-triphosphate (XTP) to their respective monophosphate derivatives. The enzyme does not distinguish between the deoxy- and ribose forms. Probably excludes non-canonical purines from RNA and DNA precursor pools, thus preventing their incorporation into RNA and DNA and avoiding chromosomal lesions. The protein is Inosine triphosphate pyrophosphatase of Mycosarcoma maydis (Corn smut fungus).